The sequence spans 361 residues: DNA double-strand break repair protein Mre11 (361 aa).

Mn(2+) contacts are provided by Asp-7, His-9, Asp-48, and Asn-83. The active-site Proton donor is His-84. Mn(2+) is bound by residues His-176, His-204, and His-206.

This sequence belongs to the MRE11/RAD32 family. Homodimer. Forms a heterotetramer composed of two Mre11 subunits and two Rad50 subunits. Requires Mn(2+) as cofactor.

Nuclease activity is regulated by Rad50. Functionally, part of the Rad50/Mre11 complex, which is involved in the early steps of DNA double-strand break (DSB) repair. The complex may facilitate opening of the processed DNA ends to aid in the recruitment of HerA and NurA. Mre11 binds to DSB ends and has both double-stranded 3'-5' exonuclease activity and single-stranded endonuclease activity. This is DNA double-strand break repair protein Mre11 from Nanoarchaeum equitans (strain Kin4-M).